A 339-amino-acid polypeptide reads, in one-letter code: DNA-directed RNA polymerase subunit alpha (339 aa).

The tract at residues 1-233 (MVREEVAGST…DLFLPFLHAE (233 aa)) is alpha N-terminal domain (alpha-NTD). The interval 266 to 339 (GIPLNCIFID…MDLLKNKLSF (74 aa)) is alpha C-terminal domain (alpha-CTD).

This sequence belongs to the RNA polymerase alpha chain family. In terms of assembly, in plastids the minimal PEP RNA polymerase catalytic core is composed of four subunits: alpha, beta, beta', and beta''. When a (nuclear-encoded) sigma factor is associated with the core the holoenzyme is formed, which can initiate transcription.

The protein localises to the plastid. It is found in the chloroplast. The catalysed reaction is RNA(n) + a ribonucleoside 5'-triphosphate = RNA(n+1) + diphosphate. DNA-dependent RNA polymerase catalyzes the transcription of DNA into RNA using the four ribonucleoside triphosphates as substrates. The polypeptide is DNA-directed RNA polymerase subunit alpha (Agrostis stolonifera (Creeping bentgrass)).